Reading from the N-terminus, the 80-residue chain is ATP synthase F(1) complex subunit delta, mitochondrial (80 aa).

A mitochondrion-targeting transit peptide spans 1–22; the sequence is MLPATLLRXSGLGRVVRQARAY.

This sequence belongs to the ATPase epsilon chain family. Component of the ATP synthase complex composed at least of ATP5F1A/subunit alpha, ATP5F1B/subunit beta, ATP5MC1/subunit c (homooctomer), MT-ATP6/subunit a, MT-ATP8/subunit 8, ATP5ME/subunit e, ATP5MF/subunit f, ATP5MG/subunit g, ATP5MK/subunit k, ATP5MJ/subunit j, ATP5F1C/subunit gamma, ATP5F1D/subunit delta, ATP5F1E/subunit epsilon, ATP5PF/subunit F6, ATP5PB/subunit b, ATP5PD/subunit d, ATP5PO/subunit OSCP. ATP synthase complex consists of a soluble F(1) head domain (subunits alpha(3) and beta(3)) - the catalytic core - and a membrane F(0) domain - the membrane proton channel (subunits c, a, 8, e, f, g, k and j). These two domains are linked by a central stalk (subunits gamma, delta, and epsilon) rotating inside the F1 region and a stationary peripheral stalk (subunits F6, b, d, and OSCP). Component of a complex composed at least by ATPIF1, ATP5F1A, ATP5F1B, ATP5F1C AND ATP5F1E.

Its subcellular location is the mitochondrion. It is found in the mitochondrion inner membrane. Functionally, subunit delta, of the mitochondrial membrane ATP synthase complex (F(1)F(0) ATP synthase or Complex V) that produces ATP from ADP in the presence of a proton gradient across the membrane which is generated by electron transport complexes of the respiratory chain. ATP synthase complex consist of a soluble F(1) head domain - the catalytic core - and a membrane F(1) domain - the membrane proton channel. These two domains are linked by a central stalk rotating inside the F(1) region and a stationary peripheral stalk. During catalysis, ATP synthesis in the catalytic domain of F(1) is coupled via a rotary mechanism of the central stalk subunits to proton translocation. In vivo, can only synthesize ATP although its ATP hydrolase activity can be activated artificially in vitro. With the central stalk subunit gamma, is essential for the biogenesis of F(1) catalytic part of the ATP synthase complex namely in the formation of F1 assembly intermediate. This is ATP synthase F(1) complex subunit delta, mitochondrial from Sus scrofa (Pig).